The following is a 390-amino-acid chain: GTPase Obg (390 aa).

An Obg domain is found at 1–159 (MKFVDEATIK…RELRLELLLL (159 aa)). The region spanning 160–333 (ADVGMLGLPN…LCDELADFMD (174 aa)) is the OBG-type G domain. Residues 166 to 173 (GLPNAGKS), 191 to 195 (FTTLI), 213 to 216 (DIPG), 283 to 286 (NKTD), and 314 to 316 (AAV) each bind GTP. Mg(2+) is bound by residues Ser173 and Thr193.

This sequence belongs to the TRAFAC class OBG-HflX-like GTPase superfamily. OBG GTPase family. Monomer. Mg(2+) serves as cofactor.

The protein resides in the cytoplasm. In terms of biological role, an essential GTPase which binds GTP, GDP and possibly (p)ppGpp with moderate affinity, with high nucleotide exchange rates and a fairly low GTP hydrolysis rate. Plays a role in control of the cell cycle, stress response, ribosome biogenesis and in those bacteria that undergo differentiation, in morphogenesis control. The polypeptide is GTPase Obg (Aliivibrio fischeri (strain MJ11) (Vibrio fischeri)).